We begin with the raw amino-acid sequence, 390 residues long: Putative nickel insertion protein (390 aa).

This sequence belongs to the LarC family.

The sequence is that of Putative nickel insertion protein from Geotalea uraniireducens (strain Rf4) (Geobacter uraniireducens).